The sequence spans 545 residues: External NADH-ubiquinone oxidoreductase 2, mitochondrial (545 aa).

A mitochondrion-targeting transit peptide spans 1–21 (MLPRLGFARTARSIHRFKMTQ). 99–129 (ELVILGTGWGAISLLKKLDTSLYNVTVVSPR) contributes to the FAD binding site. Residue 260–296 (LTFVVVGGGPTGVEFAAELQDYINQDLRKWMPDLSKE) participates in NAD(+) binding.

This sequence belongs to the NADH dehydrogenase family.

It localises to the mitochondrion intermembrane space. It carries out the reaction a quinone + NADH + H(+) = a quinol + NAD(+). The enzyme catalyses a ubiquinone + NADH + H(+) = a ubiquinol + NAD(+). Functionally, external NADH dehydrogenase required for optimum cellular growth with a number of nonfermentable carbon sources, including ethanol. With NDE1, performes the mitochondrial oxidation of cytosolic NADH under these growth conditions. Regulates the mitochondrial glycerol-3-phosphate dehydrogenase, GUT2, also involved in cytosolic NADH oxidation. In Saccharomyces cerevisiae (strain ATCC 204508 / S288c) (Baker's yeast), this protein is External NADH-ubiquinone oxidoreductase 2, mitochondrial (NDE2).